The following is an 85-amino-acid chain: ATP synthase subunit c (85 aa).

The next 2 membrane-spanning stretches (helical) occupy residues 10–30 (IAVA…FGLL) and 53–73 (FIVA…ALFF).

The protein belongs to the ATPase C chain family. As to quaternary structure, F-type ATPases have 2 components, F(1) - the catalytic core - and F(0) - the membrane proton channel. F(1) has five subunits: alpha(3), beta(3), gamma(1), delta(1), epsilon(1). F(0) has three main subunits: a(1), b(2) and c(10-14). The alpha and beta chains form an alternating ring which encloses part of the gamma chain. F(1) is attached to F(0) by a central stalk formed by the gamma and epsilon chains, while a peripheral stalk is formed by the delta and b chains.

Its subcellular location is the cell inner membrane. Its function is as follows. F(1)F(0) ATP synthase produces ATP from ADP in the presence of a proton or sodium gradient. F-type ATPases consist of two structural domains, F(1) containing the extramembraneous catalytic core and F(0) containing the membrane proton channel, linked together by a central stalk and a peripheral stalk. During catalysis, ATP synthesis in the catalytic domain of F(1) is coupled via a rotary mechanism of the central stalk subunits to proton translocation. Functionally, key component of the F(0) channel; it plays a direct role in translocation across the membrane. A homomeric c-ring of between 10-14 subunits forms the central stalk rotor element with the F(1) delta and epsilon subunits. The protein is ATP synthase subunit c of Pseudomonas syringae pv. syringae (strain B728a).